The chain runs to 30 residues: Varv peptide H (30 aa).

The cyclopeptide (Gly-Asn) cross-link spans 1–30; it reads GLPVCGETCFGGTCNTPGCSCETWPVCSRN. Disulfide bonds link Cys-5–Cys-19, Cys-9–Cys-21, and Cys-14–Cys-27.

In terms of processing, this is a cyclic peptide.

Functionally, probably participates in a plant defense mechanism. In Viola arvensis (European field pansy), this protein is Varv peptide H.